A 381-amino-acid chain; its full sequence is Gustatory and pheromone receptor 39a, isoform D (381 aa).

Residues Met1–Ala43 are Cytoplasmic-facing. The chain crosses the membrane as a helical span at residues Trp44–Phe64. Over Pro65 to Asn78 the chain is Extracellular. Asn74 is a glycosylation site (N-linked (GlcNAc...) asparagine). The chain crosses the membrane as a helical span at residues Cys79–Ile101. The Cytoplasmic segment spans residues Gln102 to Arg128. Residues Phe129–Tyr149 traverse the membrane as a helical segment. Over Gly150 to Tyr172 the chain is Extracellular. A helical membrane pass occupies residues Leu173 to Leu193. The Cytoplasmic segment spans residues Lys194 to Cys234. A helical membrane pass occupies residues Phe235–Phe255. Topologically, residues Tyr256–Ser273 are extracellular. Residues Leu274–Met294 traverse the membrane as a helical segment. Over Gly295–Thr350 the chain is Cytoplasmic. Residues Leu351 to Met371 form a helical membrane-spanning segment. Residues Glu372 to Phe381 lie on the Extracellular side of the membrane. N-linked (GlcNAc...) asparagine glycosylation is present at Asn373.

This sequence belongs to the insect chemoreceptor superfamily. Gustatory receptor (GR) family. Gr21a subfamily. Expressed in the adult labellar chemosensory neurons and adult thorax and abdomen.

It localises to the cell membrane. Gustatory receptor which mediates acceptance or avoidance behavior, depending on its substrates. Plays a role in sustaining courtship behavior in males, possibly through the reception of a stimulating arrestant pheromone. The chain is Gustatory and pheromone receptor 39a, isoform D (Gr39a) from Drosophila melanogaster (Fruit fly).